A 445-amino-acid chain; its full sequence is Phosphoglucosamine mutase (445 aa).

The active-site Phosphoserine intermediate is Ser102. Residues Ser102, Asp241, Asp243, and Asp245 each contribute to the Mg(2+) site. Residue Ser102 is modified to Phosphoserine.

The protein belongs to the phosphohexose mutase family. The cofactor is Mg(2+). Post-translationally, activated by phosphorylation.

It carries out the reaction alpha-D-glucosamine 1-phosphate = D-glucosamine 6-phosphate. Catalyzes the conversion of glucosamine-6-phosphate to glucosamine-1-phosphate. The sequence is that of Phosphoglucosamine mutase from Escherichia coli O127:H6 (strain E2348/69 / EPEC).